A 270-amino-acid chain; its full sequence is UPF0354 protein BCG9842_B0431 (270 aa).

This sequence belongs to the UPF0354 family.

This chain is UPF0354 protein BCG9842_B0431, found in Bacillus cereus (strain G9842).